An 806-amino-acid chain; its full sequence is MWFFARDPVRDFPFELSPEPPEGGPPGPWILHRGRKKATGSAVSIFVYDVKPGAEEQTQVAKAAFKRLKTLRHPNILAYIDGLETEKCLHIVTEAVTPLGTYLKARAEAGGLKEQELSWGLHQIVKALSFLVNDCNLIHNNVCMAAVFVDRAGEWKLGGLDYMYSAQGNGGGPPSKGIPELEQYDPPELADSSSRAVREKWSADMWRLGCLIWEVFNGSLPRAAALRNPGKIPKSLVTHYCELVGANPKVRPNPARFLQNCRAPGGFMSNRFVETNLFLEEIQIKEPAEKQKFFQELSKSLDSFPEDFCRHKVLPQLLTAFEFGNAGAVVLTPLFKVGKSLRAEEYQEKIIPVVVKMFSSTDRAMRIRLLQQMEQFIQYLDEPTVNTQIFPHVTHGFLDTNPAIREQTVKSMLLLAPKLNEANLNVELMKHFARLQAKDDQGPIRCNTTVCLGKIGSYLSASTRHRVLTSAFSRATKDPFAPSRVAGVLGFAATHNLYSMDDCAHKILPVLCGLTVDPEKSVRDQAFKTIRSFLSKLESVSEDPTQLAEVEKDVHAASSPGTGGAAASWAGWAVTGVSSLTSKLIRAHPTPVPSDTTVPQRPVPEGNPAPAPALAQAIPATSGHWETQEDKDTAEDSATADRWDDEDWGSLEQEAESVLAQQDDWSAKGQGSRAGQINHPDHKSLESHWSSWEVEGSWDQGWQEPSSVEPPPEGTRLASEYNWGGAEPSDKGDPFAALSVRPSAQPRPDPDSWGEDNWEGLEAESRQVKAELARKKREERRREMEAKRAEKKTTKGPMKLGARKLD.

Residues 14–314 (FELSPEPPEG…PEDFCRHKVL (301 aa)) form the Protein kinase domain. HEAT repeat units follow at residues 350–388 (IIPV…VNTQ), 389–427 (IFPH…LNVE), and 507–545 (ILPV…EDPT). Disordered regions lie at residues 586–642 (RAHP…TADR) and 663–806 (DDWS…RKLD). A compositionally biased stretch (pro residues) spans 601 to 611 (RPVPEGNPAPA). Ser-752 carries the post-translational modification Phosphoserine. The span at 752–762 (SWGEDNWEGLE) shows a compositional bias: acidic residues. Residues 755 to 795 (EDNWEGLEAESRQVKAELARKKREERRREMEAKRAEKKTTK) adopt a coiled-coil conformation. Composition is skewed to basic and acidic residues over residues 763–773 (AESRQVKAELA) and 780–793 (RRRE…EKKT). Residues 791–806 (KKTTKGPMKLGARKLD) form an interaction with COPB1 region.

It belongs to the protein kinase superfamily. In terms of assembly, homooligomer. Interacts with GORAB. Interacts with COPA, COPB1 and COPB2. Interacts with AP2B1. In terms of tissue distribution, expressed in diaphragm, quadriceps, thymus, liver, lung, spleen, kidney, heart and brain. Prominently expressed in neurons, and enriched at central nervous system synapses and neuromuscular junctions.

Its subcellular location is the cytoplasm. It localises to the cytoskeleton. The protein resides in the microtubule organizing center. The protein localises to the centrosome. It is found in the endoplasmic reticulum-Golgi intermediate compartment. Its subcellular location is the golgi apparatus. It localises to the cis-Golgi network. In terms of biological role, regulates COPI-mediated retrograde protein traffic at the interface between the Golgi apparatus and the endoplasmic reticulum. Involved in the maintenance of the Golgi apparatus morphology. The chain is N-terminal kinase-like protein (Scyl1) from Mus musculus (Mouse).